The primary structure comprises 255 residues: Protein YIPF7 (255 aa).

The Cytoplasmic portion of the chain corresponds to 1–124; it reads MSNLGQFDSD…ADGSIMNETD (124 aa). A helical membrane pass occupies residues 125–145; that stretch reads LTGPILFCMALGATLLLAGKV. Position 146 (Gln-146) is a topological domain, lumenal. The chain crosses the membrane as a helical span at residues 147–167; that stretch reads FGYVYGMSAIGCLGIHALLNL. Over 168-180 the chain is Cytoplasmic; it reads MSSSGVSYGCVAS. Residues 181–201 form a helical membrane-spanning segment; the sequence is VLGYCLLPMVILSSCAIFFSL. Residues 202–204 are Lumenal-facing; the sequence is QGT. A helical transmembrane segment spans residues 205–225; that stretch reads FGTVSALVIIGWCSLSASKIF. Residues 226 to 234 lie on the Cytoplasmic side of the membrane; the sequence is TSALAMEGQ. Residues 235–255 traverse the membrane as a helical segment; it reads QLLIAYPCALLYGLFALVTVF.

The protein belongs to the YIP1 family.

Its subcellular location is the endoplasmic reticulum membrane. The protein resides in the golgi apparatus. It localises to the cis-Golgi network membrane. It is found in the trans-Golgi network membrane. This is Protein YIPF7 (YIPF7) from Bos taurus (Bovine).